The chain runs to 346 residues: Propane 2-monooxygenase, reductase component (346 aa).

Residues 5 to 94 form the 2Fe-2S ferredoxin-type domain; the sequence is HKISFEPVDI…DCEIELLNFD (90 aa). The [2Fe-2S] cluster site is built by Cys-39, Cys-44, Cys-46, and Cys-78. Residues 104–205 enclose the FAD-binding FR-type domain; sequence IQDVTTKVAA…NGPYGSCTLR (102 aa).

Belongs to the bacterial ring-hydroxylating dioxygenase ferredoxin reductase family. The propane 2-monooxygenase multicomponent enzyme system is composed of an electron transfer component and a monooxygenase component interacting with the effector protein PrmD. The electron transfer component is composed of a reductase (PrmB), and the monooxygenase component is formed by a large subunit (PrmA) and a small subunit (PrmC). It depends on FAD as a cofactor. [2Fe-2S] cluster is required as a cofactor.

Its function is as follows. Reductase component of the propane 2-monooxygenase multicomponent enzyme system which is involved in the degradation of propane via the O2-dependent hydroxylation of propane. Reductase catalyzes the transfer of electrons from NADH or NADPH to monooxygenase. The chain is Propane 2-monooxygenase, reductase component from Gordonia sp. (strain TY-5).